The primary structure comprises 420 residues: Gamma-glutamyl phosphate reductase (420 aa).

It belongs to the gamma-glutamyl phosphate reductase family.

The protein localises to the cytoplasm. It carries out the reaction L-glutamate 5-semialdehyde + phosphate + NADP(+) = L-glutamyl 5-phosphate + NADPH + H(+). It functions in the pathway amino-acid biosynthesis; L-proline biosynthesis; L-glutamate 5-semialdehyde from L-glutamate: step 2/2. In terms of biological role, catalyzes the NADPH-dependent reduction of L-glutamate 5-phosphate into L-glutamate 5-semialdehyde and phosphate. The product spontaneously undergoes cyclization to form 1-pyrroline-5-carboxylate. This is Gamma-glutamyl phosphate reductase from Cereibacter sphaeroides (strain KD131 / KCTC 12085) (Rhodobacter sphaeroides).